The sequence spans 371 residues: tRNA-specific 2-thiouridylase MnmA (371 aa).

Residues 16-23 (GMSGGVDS) and Met-42 each bind ATP. Positions 102-104 (NPD) are interaction with target base in tRNA. The active-site Nucleophile is the Cys-107. The cysteines at positions 107 and 204 are disulfide-linked. Gly-132 serves as a coordination point for ATP. Residues 154 to 156 (KDQ) are interaction with tRNA. The active-site Cysteine persulfide intermediate is the Cys-204. The interval 316-317 (RY) is interaction with tRNA.

This sequence belongs to the MnmA/TRMU family.

It localises to the cytoplasm. The enzyme catalyses S-sulfanyl-L-cysteinyl-[protein] + uridine(34) in tRNA + AH2 + ATP = 2-thiouridine(34) in tRNA + L-cysteinyl-[protein] + A + AMP + diphosphate + H(+). Catalyzes the 2-thiolation of uridine at the wobble position (U34) of tRNA, leading to the formation of s(2)U34. This Shewanella halifaxensis (strain HAW-EB4) protein is tRNA-specific 2-thiouridylase MnmA.